The sequence spans 233 residues: Type II methyltransferase M.MunI (233 aa).

The protein belongs to the MT-A70-like family.

It carries out the reaction a 2'-deoxyadenosine in DNA + S-adenosyl-L-methionine = an N(6)-methyl-2'-deoxyadenosine in DNA + S-adenosyl-L-homocysteine + H(+). A methylase that recognizes the double-stranded sequence 5'-CAATTG-3', methylates A-3 on both strands, and protects the DNA from cleavage by the MunI endonuclease. The polypeptide is Type II methyltransferase M.MunI (Mycoplasma sp).